Consider the following 616-residue polypeptide: Homeodomain-interacting protein kinase 4 (616 aa).

Residues 11–347 (YDIIEVLGKG…PSAALRHPFV (337 aa)) enclose the Protein kinase domain. Residues 17-25 (LGKGTFGEV) and Lys-40 each bind ATP. Asp-136 functions as the Proton acceptor in the catalytic mechanism. The interval 487–616 (HKARKAPAGS…SFLQHVGGHH (130 aa)) is disordered. Over residues 497–512 (KSDSNFSNLIRLSQAS) the composition is skewed to polar residues. At Ser-512 the chain carries Phosphoserine. The span at 542-560 (REGDGPSIKDRPMDAERSG) shows a compositional bias: basic and acidic residues.

The protein belongs to the protein kinase superfamily. CMGC Ser/Thr protein kinase family. HIPK subfamily. Autophosphorylated.

The protein resides in the cytoplasm. The enzyme catalyses L-seryl-[protein] + ATP = O-phospho-L-seryl-[protein] + ADP + H(+). The catalysed reaction is L-threonyl-[protein] + ATP = O-phospho-L-threonyl-[protein] + ADP + H(+). Its function is as follows. Protein kinase that phosphorylates TP53, and thus induces TP53 repression of BIRC5 promoter. May act as a corepressor of transcription factors (Potential). The protein is Homeodomain-interacting protein kinase 4 (Hipk4) of Rattus norvegicus (Rat).